A 215-amino-acid chain; its full sequence is Protein Thf1 (215 aa).

A coiled-coil region spans residues 182-213 (ERMDQAVELVEETIAAEKRKKERRLEEQAQRT).

It belongs to the THF1 family.

May be involved in photosynthetic membrane biogenesis. This Synechococcus sp. (strain CC9605) protein is Protein Thf1.